Reading from the N-terminus, the 447-residue chain is 1-aminocyclopropane-1-carboxylate synthase 7 (447 aa).

Substrate-binding residues include glutamate 61 and tyrosine 100. Lysine 285 bears the N6-(pyridoxal phosphate)lysine mark.

The protein belongs to the class-I pyridoxal-phosphate-dependent aminotransferase family. In terms of assembly, homodimer and heterodimer. In vivo, the relevance of heterodimerization with other ACS enzymes is however unsure. Interacts with XBAT32. The cofactor is pyridoxal 5'-phosphate. Ubiquitinated by XBAT32. Ubiquitination probably leads to its subsequent degradation, thus controlling ethylene production. As to expression, expressed in roots.

The enzyme catalyses S-adenosyl-L-methionine = 1-aminocyclopropane-1-carboxylate + S-methyl-5'-thioadenosine + H(+). Its pathway is alkene biosynthesis; ethylene biosynthesis via S-adenosyl-L-methionine; ethylene from S-adenosyl-L-methionine: step 1/2. Its function is as follows. 1-aminocyclopropane-1-carboxylate synthase (ACS) enzymes catalyze the conversion of S-adenosyl-L-methionine (SAM) into 1-aminocyclopropane-1-carboxylate (ACC), a direct precursor of ethylene. The polypeptide is 1-aminocyclopropane-1-carboxylate synthase 7 (ACS7) (Arabidopsis thaliana (Mouse-ear cress)).